The following is a 1342-amino-acid chain: MVYSYTEKKRIRKDFGKRPQVLDVSYLLSIQLDSFQKFIERDPEGQYGLEAAFRSVFPIQSYSGNSELQYVSYRLGEPVFDVKECQIRGVTFSAPLRVKLRLIIYEREAPEGTVKDIKEQEVYMGEIPLMTDNGTFVINGTERVIVSQLHRSPGVFFDSDKGKTHSSGKVLYNARIIPYRGSWLDFEFDPKDNLFVRIDRRRKLPATIILRALNYSTGQILDTFFDKVVYEIHDKKLQMELLPERLRGETASFDIEANGTVYVEKGRRITARHIRQLEKDGVAQIEVPVEYIIGKAVVKDYIDENTGEIIVPANMELTLDLLAKLSQAGHKRIETLFTNDLDHGAYISETLRVDPTSDRLSALVEIYRMMRPGEPPTREAAENLFENLFFSEDRYDLSAVGRMKFNRSLLREEIEGSGILSKDDIIEVMKKLIDIRNGKGEVDDIDHLGNRRIRSVGEMAENQFRVGLVRVERAVKERLSLGDLDTLMPQDMINAKPISAAVKEFFGSSQLSQFMDQNNPLSEITHKRRISALGPGGLTRERAGFEVRDVHPTHYGRVCPIETPEGPNIGLINSLSVYAQTNEYGFLETPYRRVQDGVVTDEIHYLSAIEEGNFVIAQANTNLGDDGSFVDDLVTCRSKGESSLFSRDQVDYMDVSTQQVVSVGASLIPFLEHDDANRALMGANMQRQAVPTLCTDKPLVGTGMERAVAVDSGVTAVAKRGGTVQYVDASRIVINVNPDEMYPGEAGIDIYNLTKYIRSNQNTCISQTPCVSLGEPVERGDVLADGPSTDLGELALGQNMRIAFMPWNGYNFEDSMLVSERVVQEDRFTTIHIQELACVSRDTKLGPEEITADIPNVGEAALSKLDESGIVYIGAEVTGGDILVGKVTPKGETQLTPEEKLLRAIFGEKASDVKDSSLRVPNGVSGTVIDVQVFTRDGVEKDKRALEIEEMQLKQAKKDLTEELQIFEAGLFARIRDVLISGGIEAEKLDKLTRERWLELGLADEEKQNQLEQLAEQYDELKHEFEKKLEAKRRKITQGDDLAPGVLKIVKVYLAVKRQIQPGDKMAGRHGNKGVISKINPIEDMPYDENGVPVDIVLNPLGVPSRMNIGQILETHLGMAAKGIGDKINAMLKQHEEVAKLREFIQKAYNLGDDVRQKVDLNTFSDEEVLRLAENLKKGMPIATPVFDGAKEKEIKELLQLGGLPTSGQITLFDGRTGEQFERQVTVGYMYMLKLNHLVDDKMHARSTGSYSLVTQQPLGGKAQFGGQRFGEMEVWALEAYGAAYTLQEMLTVKSDDVNGRTKMYKNIVDGNHMMEPGMPESFNVLLKEIRSLGINIELEED.

This sequence belongs to the RNA polymerase beta chain family. The RNAP catalytic core consists of 2 alpha, 1 beta, 1 beta' and 1 omega subunit. When a sigma factor is associated with the core the holoenzyme is formed, which can initiate transcription.

It catalyses the reaction RNA(n) + a ribonucleoside 5'-triphosphate = RNA(n+1) + diphosphate. DNA-dependent RNA polymerase catalyzes the transcription of DNA into RNA using the four ribonucleoside triphosphates as substrates. This chain is DNA-directed RNA polymerase subunit beta, found in Sodalis glossinidius (strain morsitans).